The sequence spans 521 residues: Cytochrome b5 reductase 4 (521 aa).

Met-1 carries the post-translational modification N-acetylmethionine. Residues 1 to 18 (MLNVPSQSFPAPRSQQRV) show a composition bias toward polar residues. A disordered region spans residues 1 to 27 (MLNVPSQSFPAPRSQQRVASGGRSKVP). The Cytochrome b5 heme-binding domain occupies 54-130 (LIEVTEEELK…LKECLVGRMA (77 aa)). Heme-binding residues include His-89 and His-112. Residues 165–256 (PSYPSYDWFQ…KENTSWDFLG (92 aa)) enclose the CS domain. An FAD-binding FR-type domain is found at 273–385 (LYYRKCQLIS…SSPEGNFKIS (113 aa)). FAD is bound by residues 365 to 380 (DRLQ…SPEG) and 392 to 424 (DLFL…KVKL).

The protein belongs to the flavoprotein pyridine nucleotide cytochrome reductase family. The cofactor is FAD. Widely expressed.

The protein localises to the endoplasmic reticulum. It catalyses the reaction 2 Fe(III)-[cytochrome b5] + NADH = 2 Fe(II)-[cytochrome b5] + NAD(+) + H(+). Its function is as follows. NADH-cytochrome b5 reductase involved in endoplasmic reticulum stress response pathway. Plays a critical role in protecting pancreatic beta-cells against oxidant stress, possibly by protecting the cell from excess buildup of reactive oxygen species (ROS). Reduces a variety of substrates in vitro, such as cytochrome c, feericyanide and methemoglobin. The chain is Cytochrome b5 reductase 4 from Homo sapiens (Human).